Reading from the N-terminus, the 224-residue chain is Ribose-5-phosphate isomerase A (224 aa).

Substrate contacts are provided by residues 32–35, 85–88, and 98–101; these read TGST, DGAD, and KGGG. Residue E107 is the Proton acceptor of the active site. K125 is a substrate binding site.

It belongs to the ribose 5-phosphate isomerase family. Homodimer.

The catalysed reaction is aldehydo-D-ribose 5-phosphate = D-ribulose 5-phosphate. Its pathway is carbohydrate degradation; pentose phosphate pathway; D-ribose 5-phosphate from D-ribulose 5-phosphate (non-oxidative stage): step 1/1. In terms of biological role, catalyzes the reversible conversion of ribose-5-phosphate to ribulose 5-phosphate. This Pseudomonas putida (strain GB-1) protein is Ribose-5-phosphate isomerase A.